Here is an 84-residue protein sequence, read N- to C-terminus: UPF0473 protein CLJ_B2791 (84 aa).

This sequence belongs to the UPF0473 family.

This Clostridium botulinum (strain 657 / Type Ba4) protein is UPF0473 protein CLJ_B2791.